A 331-amino-acid polypeptide reads, in one-letter code: Pseudouridylate synthase TRUB2, mitochondrial (331 aa).

Catalysis depends on aspartate 98, which acts as the Nucleophile. Residues 309-331 (STGQPWGLKDPSSTLELESCSGQ) form a disordered region. A compositionally biased stretch (polar residues) spans 319–331 (PSSTLELESCSGQ).

This sequence belongs to the pseudouridine synthase TruB family. In terms of assembly, forms a regulatory protein-RNA complex, consisting of RCC1L, NGRN, RPUSD3, RPUSD4, TRUB2, FASTKD2 and 16S mt-rRNA.

Its subcellular location is the mitochondrion matrix. It catalyses the reaction a uridine in mRNA = a pseudouridine in mRNA. It carries out the reaction uridine(55) in tRNA = pseudouridine(55) in tRNA. In terms of biological role, minor enzyme contributing to the isomerization of uridine to pseudouridine (pseudouridylation) of specific mitochondrial mRNAs (mt-mRNAs) such as COXI and COXIII mt-mRNAs. As a component of a functional protein-RNA module, consisting of RCC1L, NGRN, RPUSD3, RPUSD4, TRUB2, FASTKD2 and 16S mitochondrial ribosomal RNA (16S mt-rRNA), controls 16S mt-rRNA abundance and is required for intra-mitochondrial translation. Also catalyzes pseudouridylation of some tRNAs, including synthesis of pseudouridine(55) from uracil-55, in the psi GC loop of a subset of tRNAs. The sequence is that of Pseudouridylate synthase TRUB2, mitochondrial from Mus musculus (Mouse).